We begin with the raw amino-acid sequence, 405 residues long: Arginine biosynthesis bifunctional protein ArgJ (405 aa).

Thr-155, Lys-181, Thr-192, Glu-278, Asn-400, and Thr-405 together coordinate substrate. Thr-192 functions as the Nucleophile in the catalytic mechanism.

Belongs to the ArgJ family. In terms of assembly, heterotetramer of two alpha and two beta chains.

The protein resides in the cytoplasm. The enzyme catalyses N(2)-acetyl-L-ornithine + L-glutamate = N-acetyl-L-glutamate + L-ornithine. It catalyses the reaction L-glutamate + acetyl-CoA = N-acetyl-L-glutamate + CoA + H(+). The protein operates within amino-acid biosynthesis; L-arginine biosynthesis; L-ornithine and N-acetyl-L-glutamate from L-glutamate and N(2)-acetyl-L-ornithine (cyclic): step 1/1. It participates in amino-acid biosynthesis; L-arginine biosynthesis; N(2)-acetyl-L-ornithine from L-glutamate: step 1/4. Functionally, catalyzes two activities which are involved in the cyclic version of arginine biosynthesis: the synthesis of N-acetylglutamate from glutamate and acetyl-CoA as the acetyl donor, and of ornithine by transacetylation between N(2)-acetylornithine and glutamate. The chain is Arginine biosynthesis bifunctional protein ArgJ from Dehalococcoides mccartyi (strain CBDB1).